A 2155-amino-acid polypeptide reads, in one-letter code: MAEQMSYLLFGDQSLDTHGFLADFYRQGNPSILAKTFLQRAGDSLRDEIDRLPRCQRDRIPQFRTLQQLNERYHQQTIKFPGIDSALLCITQLAHYIDRSEKEHQDVTAAENTYLSGLCTGLFAATAIASSPSLSSLLPIAVQVSLMAYRVGSHVASLAERLSPSDERSESWTYVVPGAKETDAKPILAEFHETEGISPAAQAYVSAVSASNIAISGPPATLKSLFSKDLFESRPTAIPVYGPYHAPHLHAAANLDKILRLDDEAVTAAFDGSKPRSHIVSCVTGQSFPETDTKSLLKAVVHEILNEPLLFHKALKGSLNSAKEFKGSRVLVIPYGPTQAASTLANLLKAQTKLEVVLRTPPQVSRESNGASIGNHGSSGKCKLAIVGMAGRFPDAASHEKLWELLEKGIDAHRVVPADRFPVETHVDPTGKAINTSHTPYGCWIENPGLFDPRFFNMSPREAFQTDPMQRMALTTAYEALEMSGYVPNRTPSTRLDRIGTFYGQTSDDWREINAAQEVDTYYITGGVRAFGPGRINYHFGFSGPSLNIDTACSSSAAALQVACTSLWAKECDTAIVGGLSCMTNSDIFAGLSRGQFLSKKGNCNTFDNDADGYCRADACASVIVKRLDDALADKDNILAVVLGTSTNHSADAISITHPHGPTQSVLSRAILDEAGVDPLDVDYVEMHGTGTQAGDGTEMVSVTDVFAPANRHRASDRPLYLGAIKSNVGHGEAASGITALSKVLLMMKKNSIPPHVGIKGEINKTFPKDLGARGVNIAFHKTPFQRKDGKPRRIFVNNFSAAGGNTGLLLEDGPRYKTAEADPRSVHVVTVTAKSKSAMIRNAEGLVQWMEQNPSTPVSDVAYTTTARKIQHYWRMNVAAGSLPEAIQAIKERLKSTFVPVSPEQPKVAFMFTGQGSHYAGLGKELYAHYAIFRDAIDEYDQLAGIHGFPSFLPLIDGSEPDVQNLSPVVVQLGLCSFEMALARLWQSWGIQPGAVLGHSLGEYAALHVAGVLSASDTIYLVGARAQLLVNKCTAGTHAMLAVQGSVETVKEALGARAESTNVACINGPRETVLSGASSEVAEIAEQLGGAGFKCTQLKVPFAFHSAQVEPILDDFESLARSVRFETPKVPVISPLLGKLVDNEPINPAYLRNHAREAVNFLGGLVSAQQSGMIDEKTVWLEVGPHPVCANMVKAAFGATTIAVPTLRRNEATYKTLSSSLCTLHSAGLNLDWNEFHRDFDASVRLLDLPSYAFDYKNYWLQYTGDWSLTKNRGALPASTKAIEAPKPKLSTTTVQKVVREEVKGDIAILETESEMTRDDLRLVCSGHMVNGTALTPSSLYGDMAITACEYAYKLLRPDAKNIGCNVSHMEVPKTLIFNGKAKSQVLRMSVKANAAEGFADLSWTSGEGAQKTEHANCKVFFGDNEEWLGEFERVNYLIKSRIDALRAAEQRGDASKIGRGLAYKLFAALVDYDRRYRGMESVILDSETCEATAKVVFQTSPEDGTFHTAPYWIDSVCHISGFILNGSDAIDSREQVFISHGWGSMRFAERLSAEKTYQTYIRMQNVKGSKMMSGDAYIFDGDKLIGIAGDVRFQAIPRKVLNVVLPPQGAAAAGSAPARAPAAAAKPAAKAAPKEKKQVTSANLPAVNKSLTKNSVVAQVMEIIAKETGVSHDELADNIAFSDLGVDSLMGLTISGRLREELELNVDSHAFNDHATVGAFKAFLAQFESADAAMVEENAHSSASSDSADMETESNFTTPSDDSEKDEVKGDAPAADGNVSELQDIVRSTISAEMGVEVEEVIAAPDLAALGMDSLMSLSILGILREKTGLNIPSDLLGHNPSLKDIEKALGIEDKPKRAAPKSAKQEPAKPEPKVQGEAKAHTNPVDNYPHRKATSVLLQGNHRTAKKQLFMIPDGSGSATSYTEISEVGSDVAVWGLFSPFMKTPDEYNCGVYGMATKFIQEMKRRQPEGPYAVAGWSAGGVIAYEIVNQLTKANEEVSNLLIIDAPCPITIEPLPAGLHAWFASIGLLGEGDDAEAKKIPEWLLPHFAASVTALSNYDAEPIPADKCPKVTVIWCEDGVCKLPTDPRPDPYPTGHALFLLDNRSDFGPNRWDEYLDSKKMTFHHMPGNHFSMMHGPLAKQLGGFMRDGMKS.

The tract at residues 8-245 is N-terminal acylcarrier protein transacylase domain (SAT); sequence LLFGDQSLDT…TAIPVYGPYH (238 aa). The 433-residue stretch at 381–813 folds into the Ketosynthase family 3 (KS3) domain; sequence KCKLAIVGMA…GGNTGLLLED (433 aa). Catalysis depends on for beta-ketoacyl synthase activity residues Cys553, His688, and His731. The malonyl-CoA:ACP transacylase (MAT) domain stretch occupies residues 910 to 1231; it reads AFMFTGQGSH…LCTLHSAGLN (322 aa). Residue Ser1001 is the For acyl/malonyl transferase activity of the active site. Positions 1293–1608 are product template (PT) domain; the sequence is TTTVQKVVRE…PRKVLNVVLP (316 aa). The segment at 1297-1428 is N-terminal hotdog fold; it reads QKVVREEVKG…CKVFFGDNEE (132 aa). Positions 1297–1604 constitute a PKS/mFAS DH domain; that stretch reads QKVVREEVKG…FQAIPRKVLN (308 aa). The active-site Proton acceptor; for dehydratase activity is the His1329. The C-terminal hotdog fold stretch occupies residues 1455 to 1604; that stretch reads DASKIGRGLA…FQAIPRKVLN (150 aa). The active-site Proton donor; for dehydratase activity is Asp1516. Carrier domains follow at residues 1653 to 1730 and 1779 to 1856; these read LTKN…AQFE and GNVS…GIED. An O-(pantetheine 4'-phosphoryl)serine modification is found at Ser1690. The disordered stretch occupies residues 1738–1782; that stretch reads EENAHSSASSDSADMETESNFTTPSDDSEKDEVKGDAPAADGNVS. O-(pantetheine 4'-phosphoryl)serine is present on Ser1816. The segment at 1855–1892 is disordered; the sequence is EDKPKRAAPKSAKQEPAKPEPKVQGEAKAHTNPVDNYP. Residues 1866-1883 show a composition bias toward basic and acidic residues; that stretch reads AKQEPAKPEPKVQGEAKA. A thioesterase (TE) domain region spans residues 1911-2041; it reads QLFMIPDGSG…LGEGDDAEAK (131 aa).

Its pathway is pigment biosynthesis; melanin biosynthesis. In terms of biological role, non-reducing polyketide synthase; part of the gene cluster that mediates the biosynthesis of dihydroxynaphthalene (DHN)-melanin, a bluish-green pigment forming a dark layer in the conidial wall that protects the conidia from UV radiations. The first step of the pathway is the production of the pentaketide 1,3,6,8-tetrahydroxynaphthalene (1,3,6,8-THN or T4HN) by the polyketide synthase PfmaE though condensation of acetyl-CoA with malonyl-CoA. T4HN is not stable and easily oxidizes into the stable form flaviolin. T4HN is also substrate of the hydroxynaphthalene reductase PfmaG to yield scytalone. The scytalone dehydratase PfmaJ then reduces scytalone to 1,3,8-THN. 1,3,8-THN is then substrate of the hydroxynaphthalene reductase PfmaI to yield vermelone. Vermelone is further converted by the multicopper oxidase PfmaD to 1,8-DHN. Finally the laccase PFICI_06862 transforms 1,8-DHN to DHN-melanin. The roles of the 5-oxoprolinase PfmaA and the proline iminopeptidase PfmaB within the cluster have not been elucidated yet. The polypeptide is Conidial pigment polyketide synthase PfmaE (Pestalotiopsis fici (strain W106-1 / CGMCC3.15140)).